Reading from the N-terminus, the 376-residue chain is Fructose-1,6-bisphosphate aldolase/phosphatase (376 aa).

The active-site Proton acceptor; for FBP phosphatase activity is aspartate 11. Residues aspartate 11, histidine 18, aspartate 49, and aspartate 50 each coordinate Mg(2+). Histidine 18 is a binding site for beta-D-fructose 1,6-bisphosphate. A dihydroxyacetone phosphate-binding site is contributed by histidine 18. Tyrosine 87 is a beta-D-fructose 1,6-bisphosphate binding site. Position 91 (glutamine 91) interacts with Mg(2+). Glycine 100 to asparagine 101 is a beta-D-fructose 1,6-bisphosphate binding site. Aspartate 128 serves as a coordination point for Mg(2+). A beta-D-fructose 1,6-bisphosphate-binding site is contributed by lysine 129. Lysine 129 serves as a coordination point for dihydroxyacetone phosphate. The active-site Proton donor/acceptor; for FBP aldolase activity is tyrosine 224. Residues lysine 227, aspartate 228, and aspartate 229 each contribute to the Mg(2+) site. Catalysis depends on lysine 227, which acts as the Schiff-base intermediate with DHAP; for FBP aldolase activity. Beta-D-fructose 1,6-bisphosphate is bound by residues glutamine 237–lysine 238, arginine 261, and tyrosine 342. A dihydroxyacetone phosphate-binding site is contributed by arginine 261. The segment at methionine 357–aspartate 376 is disordered.

Belongs to the FBP aldolase/phosphatase family. In terms of assembly, homooctamer; dimer of tetramers. It depends on Mg(2+) as a cofactor.

It carries out the reaction beta-D-fructose 1,6-bisphosphate + H2O = beta-D-fructose 6-phosphate + phosphate. The enzyme catalyses beta-D-fructose 1,6-bisphosphate = D-glyceraldehyde 3-phosphate + dihydroxyacetone phosphate. Its pathway is carbohydrate biosynthesis; gluconeogenesis. Catalyzes two subsequent steps in gluconeogenesis: the aldol condensation of dihydroxyacetone phosphate (DHAP) and glyceraldehyde-3-phosphate (GA3P) to fructose-1,6-bisphosphate (FBP), and the dephosphorylation of FBP to fructose-6-phosphate (F6P). This chain is Fructose-1,6-bisphosphate aldolase/phosphatase, found in Cenarchaeum symbiosum (strain A).